Reading from the N-terminus, the 409-residue chain is MKIERPRGTRDFLPDEMERRREIEKRMRKIAESFGYREVATPTFEYLELFTRKSGEGIIEEMYVFKDKSGRDLALRPELTAPVMRMFVNECSVMPKPLRFYYFANCFRYERPQKGRYREFWQFGVELIGSESYLADAEVIILADKILKDVGVNFSLEIGHVGIMRHLLKPIGEDRASKVMRLIDKGDREGLESYLAEIRVNEDLRDKIFSLLELKGDESVIEEAKEIIDYDFGHLESLSALLRDVGVDFTLNLGIARGLDYYTGVVFECYAEGLGAQKQVCGGGSYELSSLFGGPVTPSTGFAIGFDRVCEACSVEAGEKSVVAVVSFKGLESQAFRVASMLRERGFTAVVDVMGRNLKKQMSFASEMGVKYAVILGPDEVKSGRVAIKNLETQEQVVVAEEELFSILQ.

It belongs to the class-II aminoacyl-tRNA synthetase family.

Its subcellular location is the cytoplasm. It carries out the reaction tRNA(His) + L-histidine + ATP = L-histidyl-tRNA(His) + AMP + diphosphate + H(+). The protein is Histidine--tRNA ligase (hisS) of Archaeoglobus fulgidus (strain ATCC 49558 / DSM 4304 / JCM 9628 / NBRC 100126 / VC-16).